Consider the following 119-residue polypeptide: Large ribosomal subunit protein uL24 (119 aa).

Belongs to the universal ribosomal protein uL24 family. Part of the 50S ribosomal subunit.

In terms of biological role, one of two assembly initiator proteins, it binds directly to the 5'-end of the 23S rRNA, where it nucleates assembly of the 50S subunit. Functionally, located at the polypeptide exit tunnel on the outside of the subunit. This chain is Large ribosomal subunit protein uL24, found in Methanosarcina acetivorans (strain ATCC 35395 / DSM 2834 / JCM 12185 / C2A).